Reading from the N-terminus, the 303-residue chain is MYYGFDIGGTKIALGVFDSGRQLQWEKRVPTPRDSYDAFLDAVCELVAEADQRFGCKGSVGIGIPGMPETEDGTLYASNVPAASGKPLRADLSARLDRDVRLDNDANCFALSEAWDDEFTQYPLVMGLILGTGVGGGLIFNGKPITGKSYITGEFGHMRLPVDALTMMGLDFPLRRCGCGQHGCIENYLSGRGFAWLYQHYYHQPLQAPEIIALYDQGDEQARAHVERYLDLLAVCLGNILTIVDPDLVVIGGGLSNFPAITTQLADRLPRHLLPVARVPRIERARHGDAGGMRGAAFLHLTD.

ATP-binding positions include 4 to 11 (GFDIGGTK) and 133 to 140 (GVGGGLIF). Zn(2+) contacts are provided by histidine 157, cysteine 177, cysteine 179, and cysteine 184.

The protein belongs to the ROK (NagC/XylR) family. NagK subfamily.

It carries out the reaction N-acetyl-D-glucosamine + ATP = N-acetyl-D-glucosamine 6-phosphate + ADP + H(+). It participates in cell wall biogenesis; peptidoglycan recycling. Functionally, catalyzes the phosphorylation of N-acetyl-D-glucosamine (GlcNAc) derived from cell-wall degradation, yielding GlcNAc-6-P. The sequence is that of N-acetyl-D-glucosamine kinase from Escherichia coli O7:K1 (strain IAI39 / ExPEC).